A 640-amino-acid polypeptide reads, in one-letter code: (Z)-beta-ocimene synthase TPS13PK, chloroplastic (640 aa).

The transit peptide at 1 to 95 (MAALVSTVSS…PFKDEAYVKR (95 aa)) directs the protein to the chloroplast. The disordered stretch occupies residues 50 to 69 (MSTNNNNNNNQKNSSRRSAN). Residues 60–69 (QKNSSRRSAN) are compositionally biased toward polar residues. Positions 334, 371, 375, 515, and 518 each coordinate (2E)-geranyl diphosphate. Mg(2+) is bound by residues Asp-371 and Asp-375. Positions 371–375 (DDIYD) match the DDXXD motif motif. The Mg(2+) site is built by Asp-518, Thr-522, and Glu-526.

The protein belongs to the terpene synthase family. Monomer. Mg(2+) serves as cofactor.

The protein localises to the plastid. It localises to the chloroplast. The enzyme catalyses (2E)-geranyl diphosphate = (Z)-beta-ocimene + diphosphate. It participates in secondary metabolite biosynthesis; terpenoid biosynthesis. In terms of biological role, involved in monoterpene (C10) olefins biosynthesis, constituants of cannabinoids and terpenoids-rich resins. Catalyzes mainly the conversion of (2E)-geranyl diphosphate to (Z)-beta-ocimene. This Cannabis sativa (Hemp) protein is (Z)-beta-ocimene synthase TPS13PK, chloroplastic.